A 273-amino-acid chain; its full sequence is Pyrroline-5-carboxylate reductase (273 aa).

It belongs to the pyrroline-5-carboxylate reductase family.

Its subcellular location is the cytoplasm. The catalysed reaction is L-proline + NADP(+) = (S)-1-pyrroline-5-carboxylate + NADPH + 2 H(+). It carries out the reaction L-proline + NAD(+) = (S)-1-pyrroline-5-carboxylate + NADH + 2 H(+). Its pathway is amino-acid biosynthesis; L-proline biosynthesis; L-proline from L-glutamate 5-semialdehyde: step 1/1. Its function is as follows. Catalyzes the reduction of 1-pyrroline-5-carboxylate (PCA) to L-proline. The polypeptide is Pyrroline-5-carboxylate reductase (Pseudomonas aeruginosa (strain ATCC 15692 / DSM 22644 / CIP 104116 / JCM 14847 / LMG 12228 / 1C / PRS 101 / PAO1)).